Here is a 305-residue protein sequence, read N- to C-terminus: tRNA dimethylallyltransferase (305 aa).

11 to 18 (GPTAVGKT) lines the ATP pocket. 13–18 (TAVGKT) contributes to the substrate binding site. Residues 36–39 (DSMQ) are interaction with substrate tRNA.

This sequence belongs to the IPP transferase family. In terms of assembly, monomer. Requires Mg(2+) as cofactor.

The catalysed reaction is adenosine(37) in tRNA + dimethylallyl diphosphate = N(6)-dimethylallyladenosine(37) in tRNA + diphosphate. In terms of biological role, catalyzes the transfer of a dimethylallyl group onto the adenine at position 37 in tRNAs that read codons beginning with uridine, leading to the formation of N6-(dimethylallyl)adenosine (i(6)A). In Listeria monocytogenes serotype 4a (strain HCC23), this protein is tRNA dimethylallyltransferase.